The following is a 314-amino-acid chain: Dual specificity protein phosphatase 2 (314 aa).

The region spanning Glu-23–Ser-144 is the Rhodanese domain. Positions Gly-172 to Cys-313 constitute a Tyrosine-protein phosphatase domain. The active-site Phosphocysteine intermediate is Cys-257.

The protein belongs to the protein-tyrosine phosphatase family. Non-receptor class dual specificity subfamily. As to quaternary structure, interacts with MAPK14; this interaction does not lead to catalytic activation of DUSP2 and dephosphrylation of MAPK14. In terms of tissue distribution, expressed in hematopoietic tissues.

It is found in the nucleus. The enzyme catalyses O-phospho-L-tyrosyl-[protein] + H2O = L-tyrosyl-[protein] + phosphate. It catalyses the reaction O-phospho-L-threonyl-[protein] + H2O = L-threonyl-[protein] + phosphate. Its function is as follows. Dephosphorylates both phosphorylated Thr and Tyr residues in MAPK1, and dephosphorylation of phosphotyrosine is slightly faster than that of phosphothreonine. Can dephosphorylate MAPK1. The polypeptide is Dual specificity protein phosphatase 2 (Homo sapiens (Human)).